The primary structure comprises 430 residues: MKQALRVAFGFLMLWAAVLHAEVRIEITQGVDSARPIGVVPFKWAGPGAAPEDIGGIVAADLRNSGKFNPLDRSRLPQQPATAQEVQPTAWSALGIDAVVVGQVTPNPDGSYNIAYQLVDTGGAPGTVLAQNSYKVNKQWLRYAGHTASDEVFEKLTGIKGAFRTRIAYVVQTNGGQFPYELRVSDYDGYNQFVVHRSPQPLMSPAWSPDGSKLAYVTFESGRSALVIQTLANGSVRQVASFPRHNGAPAFSPDGTKLAFALSKTGSLNLYVMDLASGQIRQITDGRSNNTEPTWFPDSQTLAFTSDQAGRPQVYKMNINGGAAQRITWEGSQNQDADVSSDGKFMVMVSSNNGQQHIAKQDLVTGGVQVLSSTFLDETPSLAPNGTMVIYSSSQGMGSVLNLVSTDGRFKARLPATDGQVKSPAWSPYL.

An N-terminal signal peptide occupies residues 1 to 21 (MKQALRVAFGFLMLWAAVLHA).

The protein belongs to the TolB family. The Tol-Pal system is composed of five core proteins: the inner membrane proteins TolA, TolQ and TolR, the periplasmic protein TolB and the outer membrane protein Pal. They form a network linking the inner and outer membranes and the peptidoglycan layer.

Its subcellular location is the periplasm. Functionally, part of the Tol-Pal system, which plays a role in outer membrane invagination during cell division and is important for maintaining outer membrane integrity. TolB occupies a key intermediary position in the Tol-Pal system because it communicates directly with both membrane-embedded components, Pal in the outer membrane and TolA in the inner membrane. This is Tol-Pal system protein TolB from Salmonella choleraesuis (strain SC-B67).